The following is a 367-amino-acid chain: Porin Omp2a (367 aa).

Positions methionine 1–alanine 22 are cleaved as a signal peptide.

This sequence belongs to the alphaproteobacteria porin family. Monomer.

It localises to the cell outer membrane. In terms of biological role, forms passive diffusion pores that allow small molecular weight hydrophilic materials across the outer membrane. The chain is Porin Omp2a (omp2a) from Brucella canis (strain ATCC 23365 / NCTC 10854 / RM-666).